Consider the following 261-residue polypeptide: Proteasome subunit alpha (261 aa).

The segment at 242 to 261 (NEENKKEEENREETKEKQEE) is disordered.

Belongs to the peptidase T1A family. In terms of assembly, the 20S proteasome core is composed of 14 alpha and 14 beta subunits that assemble into four stacked heptameric rings, resulting in a barrel-shaped structure. The two inner rings, each composed of seven catalytic beta subunits, are sandwiched by two outer rings, each composed of seven alpha subunits. The catalytic chamber with the active sites is on the inside of the barrel. Has a gated structure, the ends of the cylinder being occluded by the N-termini of the alpha-subunits. Is capped at one or both ends by the proteasome regulatory ATPase, PAN.

The protein localises to the cytoplasm. With respect to regulation, the formation of the proteasomal ATPase PAN-20S proteasome complex, via the docking of the C-termini of PAN into the intersubunit pockets in the alpha-rings, triggers opening of the gate for substrate entry. Interconversion between the open-gate and close-gate conformations leads to a dynamic regulation of the 20S proteasome proteolysis activity. Its function is as follows. Component of the proteasome core, a large protease complex with broad specificity involved in protein degradation. The M.jannaschii proteasome is able to cleave oligopeptides after Glu, Asp, Tyr, Phe, Trp, slightly after Arg, but not after Ala. Thus, displays caspase-like and chymotrypsin-like activities and low level of trypsin-like activity. The chain is Proteasome subunit alpha from Methanocaldococcus jannaschii (strain ATCC 43067 / DSM 2661 / JAL-1 / JCM 10045 / NBRC 100440) (Methanococcus jannaschii).